Consider the following 81-residue polypeptide: RBAK downstream neighbor protein (81 aa).

The first 22 residues, 1–22, serve as a signal peptide directing secretion; sequence MWPPLLLLLLLLPAAPVPTAKA.

Its subcellular location is the secreted. The polypeptide is RBAK downstream neighbor protein (RBAKDN) (Homo sapiens (Human)).